The following is a 382-amino-acid chain: Anhydro-N-acetylmuramic acid kinase (382 aa).

9 to 16 is a binding site for ATP; that stretch reads GTSLDGID.

This sequence belongs to the anhydro-N-acetylmuramic acid kinase family.

It catalyses the reaction 1,6-anhydro-N-acetyl-beta-muramate + ATP + H2O = N-acetyl-D-muramate 6-phosphate + ADP + H(+). It functions in the pathway amino-sugar metabolism; 1,6-anhydro-N-acetylmuramate degradation. Its pathway is cell wall biogenesis; peptidoglycan recycling. Its function is as follows. Catalyzes the specific phosphorylation of 1,6-anhydro-N-acetylmuramic acid (anhMurNAc) with the simultaneous cleavage of the 1,6-anhydro ring, generating MurNAc-6-P. Is required for the utilization of anhMurNAc either imported from the medium or derived from its own cell wall murein, and thus plays a role in cell wall recycling. In Bacillus cereus (strain AH187), this protein is Anhydro-N-acetylmuramic acid kinase.